Consider the following 1646-residue polypeptide: Protein TOPAZ1 (1646 aa).

Over residues 1–11 the composition is skewed to pro residues; sequence MRPPTTPPVPT. Disordered regions lie at residues 1–90, 407–439, and 850–877; these read MRPP…TDLV, FKSM…DTEE, and QEPR…PGDL. Basic and acidic residues predominate over residues 63–74; that stretch reads GREETEAKENGK. A compositionally biased stretch (polar residues) spans 409–420; sequence SMTSSTVKSPSD. Basic and acidic residues-rich tracts occupy residues 429–439 and 853–863; these read PRGDLKTDTEE and RVSEEHPSADF.

Its subcellular location is the cytoplasm. The protein localises to the cytosol. Its function is as follows. Important for normal spermatogenesis and male fertility. Specifically required for progression to the post-meiotic stages of spermatocyte development. Seems to be necessary for normal expression levels of a number of testis-expressed gene transcripts, although its role in this process is unclear. The chain is Protein TOPAZ1 (Topaz1) from Rattus norvegicus (Rat).